Consider the following 368-residue polypeptide: Probable auxin efflux carrier component 5b (368 aa).

The next 10 helical transmembrane spans lie at 7–27 (VYKV…GYGS), 39–59 (CDAV…FDFA), 71–91 (VLAA…ACAA), 114–134 (CITG…VPLL), 145–165 (LIVQ…LLAF), 227–247 (VLGV…PSII), 251–271 (VLIM…LFMA), 286–306 (LGMA…AFAL), 312–332 (LLRL…FVFA), and 347–367 (IFGT…LGFI).

It belongs to the auxin efflux carrier (TC 2.A.69.1) family. As to expression, expressed at low levels in roots and shoot apex.

It localises to the membrane. Functionally, may act as a component of the auxin efflux carrier. The protein is Probable auxin efflux carrier component 5b of Oryza sativa subsp. japonica (Rice).